The following is a 1450-amino-acid chain: Arf-GAP with Rho-GAP domain, ANK repeat and PH domain-containing protein 1 (1450 aa).

Positions 6-70 (DAALSVAEWL…LAGLLRAHTS (65 aa)) constitute an SAM domain. The segment at 81-90 (PVPMKRHIFR) is required for interaction with SH3KBP1. Disordered regions lie at residues 89–144 (FRSP…LPPL) and 173–302 (TKEE…SSLS). A compositionally biased stretch (pro residues) spans 92–102 (PPVPATPPEPL). Residues 190 to 199 (QSEEPLSTLP) show a composition bias toward low complexity. Residues 200–219 (QGPPQPPSPPPCPPEIPPKP) are compositionally biased toward pro residues. Composition is skewed to acidic residues over residues 225-236 (EFDDSDYDEVPE) and 269-286 (EGEELSGDDQGDEEEDDH). At Ser229 the chain carries Phosphoserine. At Tyr231 the chain carries Phosphotyrosine; by PTK6. The region spanning 327–419 (PVIKAGWLDK…WMQALQQAMA (93 aa)) is the PH 1 domain. At Thr354 the chain carries Phosphothreonine. Ser428 bears the Phosphoserine mark. Phosphotyrosine occurs at positions 431 and 504. The PH 2 domain occupies 440 to 529 (QPDRAGSLEL…WLEAMQGAIA (90 aa)). Positions 535–660 (SEVAERIWAA…RYHPLFGNQE (126 aa)) constitute an Arf-GAP domain. The segment at 550-576 (CADCGAPQPDWASINLCVVICKRCAGE) adopts a C4-type zinc-finger fold. Ser738 is modified (phosphoserine). In terms of domain architecture, PH 3 spans 743–850 (TVSHSGFLYK…WVKCIAKAFV (108 aa)). In terms of domain architecture, Rho-GAP spans 954–1139 (ASMGDTLSEQ…DLINHYVVVF (186 aa)). Positions 1172–1261 (GDFICTVYLE…SHLVVKKHQA (90 aa)) constitute a Ras-associating domain. Residues 1274–1396 (GDTKHGMMKF…WFATFLFVQH (123 aa)) enclose the PH 4 domain. Residues Ser1428 and Ser1435 each carry the phosphoserine modification.

Interacts with SH3KBP1/CIN85 (via SH3 domains). The interaction is independent of EGF and does not affect ARAP1 GTPase-activating activity but is involved in regulating ubiquitination and endocytic trafficking of EGFR. ARAP1 competes with E3 ubiquitin-protein ligase CBL for binding to SH3KBP1, preventing interaction of CBL with SH3KBP1; this is likely to regulate SH3KBP1-mediated internalization of EGFR. Interacts with TNFRSF10A. In terms of processing, phosphorylated by PTK6 following EGF stimulation which enhances EGFR signaling by delaying EGFR down-regulation; the interaction is mediated by the SH2 domain of PTK6. Phosphorylation promotes association with the Golgi apparatus and endosomes. As to expression, detected in heart, skeletal muscle, spleen, kidney, liver, placenta, lung, peripheral blood leukocytes, adrenal gland, bone marrow, brain, lymph node, mammary gland, prostate, spinal cord, stomach, thyroid and trachea.

The protein resides in the cytoplasm. Its subcellular location is the golgi apparatus. It localises to the trans-Golgi network. The protein localises to the golgi stack. It is found in the cell membrane. The protein resides in the endosome. Its subcellular location is the multivesicular body. It localises to the cell projection. The protein localises to the ruffle. It is found in the podosome. The protein resides in the early endosome. Functionally, phosphatidylinositol 3,4,5-trisphosphate-dependent GTPase-activating protein that modulates actin cytoskeleton remodeling by regulating ARF and RHO family members. Activated by phosphatidylinositol 3,4,5-trisphosphate (PtdIns(3,4,5)P3) binding and, to a lesser extent, by phosphatidylinositol 3,4-bisphosphate (PtdIns(3,4)P2) binding. Has a preference for ARF1 and ARF5. Positively regulates the ring size of circular dorsal ruffles and promotes macropinocytosis. Acts as a bridging factor in osteoclasts to control actin and membrane dynamics. Regulates the condensing of osteoclast podosomes into sealing zones which segregate the bone-facing membrane from other membrane domains and are required for osteoclast resorption activity. Also regulates recruitment of the AP-3 complex to endosomal membranes and trafficking of lysosomal membrane proteins to the ruffled membrane border of osteoclasts to modulate bone resorption. Regulates the endocytic trafficking of EGFR. Regulates the incorporation of CD63 and CD9 into multivesicular bodies. Required in the retinal pigment epithelium (RPE) for photoreceptor survival due to its role in promoting RPE phagocytosis. This is Arf-GAP with Rho-GAP domain, ANK repeat and PH domain-containing protein 1 (ARAP1) from Homo sapiens (Human).